A 616-amino-acid chain; its full sequence is Chaperone protein HscA homolog (616 aa).

This sequence belongs to the heat shock protein 70 family.

Its function is as follows. Chaperone involved in the maturation of iron-sulfur cluster-containing proteins. Has a low intrinsic ATPase activity which is markedly stimulated by HscB. The polypeptide is Chaperone protein HscA homolog (Mannheimia succiniciproducens (strain KCTC 0769BP / MBEL55E)).